Reading from the N-terminus, the 535-residue chain is MASTSTASATAMAGAFAAAGVNKPRGSAACPRVPAGGRQRLSCVVRCDAGPGVPAQMAAMAASVAALEQFKISADRYMKEKSSIAVIGLSIHTAPVEMREKLAVAEELWPRAVAELTNLNHIEKAAVLSPCNRMEIYVVALSWNRGIREIVDWMSMKSGIPAVELREHLFMFRDSDATRHLFEVSSGLDSLVLGEGQILAQVKQVVRSGQNSGGLGKNIDRMFKDAITAGKRVRSETNISCGAVSVSSAAVELALMKLPKSECLSARMLLIGAGKMGRLVAKHLAAKGCKKVVIVNRSVERVDAIREEMQGIEIVYRSLTEMYEAAADADVVFTSTSSESPLFTKEHAEALPPVSGALGGVRLFVDISVPRNVSACVSDVGHARVYNVDDLKEVVEANKEDRLRKAMEAQTIISEELKRFEAWRDSMETVPTIKKLRSYADRVRASELDKCLQKIGEDALTKKMRRSIEQLSTGIVNRLLHGPLQHLRCDGTDNRTLDETLENMHALNRMFGLDTEKAVMEQKIKTKVEKQKTQN.

Residue cysteine 131 is the Nucleophile of the active site. Substrate is bound by residues cysteine 131 to arginine 133, serine 190, glutamate 195 to glutamine 197, and glutamine 201. Glycine 272–glycine 277 is a binding site for NADP(+).

The protein belongs to the glutamyl-tRNA reductase family. Primarily expressed in roots.

It is found in the plastid. It localises to the chloroplast. The catalysed reaction is (S)-4-amino-5-oxopentanoate + tRNA(Glu) + NADP(+) = L-glutamyl-tRNA(Glu) + NADPH + H(+). The protein operates within porphyrin-containing compound metabolism; protoporphyrin-IX biosynthesis; 5-aminolevulinate from L-glutamyl-tRNA(Glu): step 1/2. Functionally, catalyzes the NADPH-dependent reduction of glutamyl-tRNA(Glu) to glutamate 1-semialdehyde (GSA). The chain is Glutamyl-tRNA reductase 3, chloroplastic (HEMA3) from Hordeum vulgare (Barley).